Here is a 943-residue protein sequence, read N- to C-terminus: Protein translocase subunit SecA (943 aa).

ATP is bound by residues Gln-90, 108–112, and Asp-509; that span reads GEGKT. The disordered stretch occupies residues 537 to 556; sequence NEHKPPIPKQRSSKSKGGFS.

It belongs to the SecA family. Monomer and homodimer. Part of the essential Sec protein translocation apparatus which comprises SecA, SecYEG and auxiliary proteins SecDF. Other proteins may also be involved.

It is found in the cell inner membrane. The protein resides in the cellular thylakoid membrane. The protein localises to the cytoplasm. The catalysed reaction is ATP + H2O + cellular proteinSide 1 = ADP + phosphate + cellular proteinSide 2.. Its function is as follows. Part of the Sec protein translocase complex. Interacts with the SecYEG preprotein conducting channel. Has a central role in coupling the hydrolysis of ATP to the transfer of proteins into and across the cell membrane, serving as an ATP-driven molecular motor driving the stepwise translocation of polypeptide chains across the membrane. In terms of biological role, probably participates in protein translocation into and across both the cytoplasmic and thylakoid membranes in cyanobacterial cells. The protein is Protein translocase subunit SecA of Prochlorococcus marinus (strain MIT 9301).